A 147-amino-acid chain; its full sequence is D-aminoacyl-tRNA deacylase (147 aa).

The Gly-cisPro motif, important for rejection of L-amino acids motif lies at 136–137; that stretch reads GP.

The protein belongs to the DTD family. Homodimer.

It localises to the cytoplasm. The catalysed reaction is glycyl-tRNA(Ala) + H2O = tRNA(Ala) + glycine + H(+). It carries out the reaction a D-aminoacyl-tRNA + H2O = a tRNA + a D-alpha-amino acid + H(+). Functionally, an aminoacyl-tRNA editing enzyme that deacylates mischarged D-aminoacyl-tRNAs. Also deacylates mischarged glycyl-tRNA(Ala), protecting cells against glycine mischarging by AlaRS. Acts via tRNA-based rather than protein-based catalysis; rejects L-amino acids rather than detecting D-amino acids in the active site. By recycling D-aminoacyl-tRNA to D-amino acids and free tRNA molecules, this enzyme counteracts the toxicity associated with the formation of D-aminoacyl-tRNA entities in vivo and helps enforce protein L-homochirality. The chain is D-aminoacyl-tRNA deacylase from Nitratiruptor sp. (strain SB155-2).